Reading from the N-terminus, the 506-residue chain is MVKIRPDEISSIIKQQIEQYQQEVKAVNVGTVFQVGDGIARIYGLDKVMAGELVEFEDGTVGIALNLEAKNVGAVLMGEGTRVQEGSSVRATGKIAQIPVGDGYLGRVVNSLARPIDGKGEIATKENRLIESPAPGIISRRSVHEPLQTGIVAIDAMIPIGRGQRELIIGDRQTGKTAIAVDTILNQKGKDVVCVYVAIGQKASSIAQVVNTLQERGAMDYTIIVAATADSPATLQYLSPYTGAALAEYFMYTGRHTLVIYDDLTKQAQAYREMSLLLRRPPGREAYPGDVFYLHSRLLERAAKLNDKLGSGSMTALPVVETQEGDVSAYIPTNVISITDGQIFLSADIFNAGIRPAINVGISVSRVGSAAQPKAMKQVAGKLKLELAQFAELEAFSQFASDLDQATQNQLARGQRLRELLKQSQSSPLSLEDQVASIYAGTNGYLDVLPADRVRAFLVGLRQYLATNKAKYGEILRSTNALTDEAQTLLKEALKEYTEEFLASAK.

170–177 (GDRQTGKT) contacts ATP.

The protein belongs to the ATPase alpha/beta chains family. As to quaternary structure, F-type ATPases have 2 components, CF(1) - the catalytic core - and CF(0) - the membrane proton channel. CF(1) has five subunits: alpha(3), beta(3), gamma(1), delta(1), epsilon(1). CF(0) has four main subunits: a, b, b' and c.

It is found in the plastid. It localises to the chloroplast thylakoid membrane. The enzyme catalyses ATP + H2O + 4 H(+)(in) = ADP + phosphate + 5 H(+)(out). Functionally, produces ATP from ADP in the presence of a proton gradient across the membrane. The alpha chain is a regulatory subunit. This Chlorella vulgaris (Green alga) protein is ATP synthase subunit alpha, chloroplastic.